The chain runs to 286 residues: Probable 4-deoxy-4-formamido-L-arabinose-phosphoundecaprenol deformylase ArnD (286 aa).

The 248-residue stretch at 1–248 folds into the NodB homology domain; it reads MGTKLGVPNL…IAINEGINFC (248 aa).

It belongs to the polysaccharide deacetylase family. ArnD deformylase subfamily.

The catalysed reaction is 4-deoxy-4-formamido-alpha-L-arabinopyranosyl di-trans,octa-cis-undecaprenyl phosphate + H2O = 4-amino-4-deoxy-alpha-L-arabinopyranosyl di-trans,octa-cis-undecaprenyl phosphate + formate. The protein operates within glycolipid biosynthesis; 4-amino-4-deoxy-alpha-L-arabinose undecaprenyl phosphate biosynthesis; 4-amino-4-deoxy-alpha-L-arabinose undecaprenyl phosphate from UDP-4-deoxy-4-formamido-beta-L-arabinose and undecaprenyl phosphate: step 2/2. It participates in bacterial outer membrane biogenesis; lipopolysaccharide biosynthesis. Catalyzes the deformylation of 4-deoxy-4-formamido-L-arabinose-phosphoundecaprenol to 4-amino-4-deoxy-L-arabinose-phosphoundecaprenol. The modified arabinose is attached to lipid A and is required for resistance to polymyxin and cationic antimicrobial peptides. This chain is Probable 4-deoxy-4-formamido-L-arabinose-phosphoundecaprenol deformylase ArnD, found in Wigglesworthia glossinidia brevipalpis.